Here is a 242-residue protein sequence, read N- to C-terminus: Response regulator GtcR (242 aa).

The Response regulatory domain maps to Thr4–Leu117. A 4-aspartylphosphate modification is found at Asp53. Positions Thr133–Ser233 form a DNA-binding region, ompR/PhoB-type.

Phosphorylated by GtcS.

Its function is as follows. Member of the two-component regulatory system GtcS/GtcR which may act in the control of the transcription of the grs operon which encodes the multienzymes involved in the biosynthesis of the peptide antibiotic gramicidin S. The polypeptide is Response regulator GtcR (gtcR) (Aneurinibacillus migulanus (Bacillus migulanus)).